Here is a 321-residue protein sequence, read N- to C-terminus: ATP-dependent 6-phosphofructokinase (321 aa).

Residue G10 participates in ATP binding. 20–24 is an ADP binding site; that stretch reads RAVVR. Residues 71-72 and 101-104 each bind ATP; these read RD and GEGT. A Mg(2+)-binding site is contributed by E102. Residue 125–127 participates in substrate binding; it reads TID. Catalysis depends on D127, which acts as the Proton acceptor. ADP is bound at residue R154. Substrate-binding positions include R162 and 169–171; that span reads MGR. ADP contacts are provided by residues 185-187 and 213-215; these read GAE and KLH. Substrate-binding positions include E222, R246, and 252–255; that span reads HIQR.

The protein belongs to the phosphofructokinase type A (PFKA) family. ATP-dependent PFK group I subfamily. Prokaryotic clade 'B1' sub-subfamily. In terms of assembly, homotetramer. Mg(2+) serves as cofactor.

The protein localises to the cytoplasm. It catalyses the reaction beta-D-fructose 6-phosphate + ATP = beta-D-fructose 1,6-bisphosphate + ADP + H(+). Its pathway is carbohydrate degradation; glycolysis; D-glyceraldehyde 3-phosphate and glycerone phosphate from D-glucose: step 3/4. With respect to regulation, allosterically activated by ADP and other diphosphonucleosides, and allosterically inhibited by phosphoenolpyruvate. Its function is as follows. Catalyzes the phosphorylation of D-fructose 6-phosphate to fructose 1,6-bisphosphate by ATP, the first committing step of glycolysis. The protein is ATP-dependent 6-phosphofructokinase of Aquifex aeolicus (strain VF5).